Here is an 81-residue protein sequence, read N- to C-terminus: Photosystem I iron-sulfur center (81 aa).

2 consecutive 4Fe-4S ferredoxin-type domains span residues 2–31 and 39–68; these read SHSVKIYDTCIGCTQCVRACPLDVLEMVPW and IASSPRTEDCVGCKRCETACPTDFLSIRVY. [4Fe-4S] cluster-binding residues include cysteine 11, cysteine 14, cysteine 17, cysteine 21, cysteine 48, cysteine 51, cysteine 54, and cysteine 58.

The cyanobacterial PSI reaction center is composed of one copy each of PsaA,B,C,D,E,F,I,J,K,L,M and X, and forms trimeric complexes. It depends on [4Fe-4S] cluster as a cofactor.

The protein localises to the cellular thylakoid membrane. It carries out the reaction reduced [plastocyanin] + hnu + oxidized [2Fe-2S]-[ferredoxin] = oxidized [plastocyanin] + reduced [2Fe-2S]-[ferredoxin]. Apoprotein for the two 4Fe-4S centers FA and FB of photosystem I (PSI); essential for photochemical activity. FB is the terminal electron acceptor of PSI, donating electrons to ferredoxin. The C-terminus interacts with PsaA/B/D and helps assemble the protein into the PSI complex. Required for binding of PsaD and PsaE to PSI. PSI is a plastocyanin/cytochrome c6-ferredoxin oxidoreductase, converting photonic excitation into a charge separation, which transfers an electron from the donor P700 chlorophyll pair to the spectroscopically characterized acceptors A0, A1, FX, FA and FB in turn. In terms of biological role, mutant proteins with a 3Fe-4S center are unable to reconstitute PSI activity in vivo. The protein is Photosystem I iron-sulfur center of Synechocystis sp. (strain ATCC 27184 / PCC 6803 / Kazusa).